The following is a 413-amino-acid chain: Bestrophin homolog 13 (413 aa).

4 helical membrane-spanning segments follow: residues 29-49 (LIYL…IDLI), 72-92 (SYTR…NVVA), 236-256 (LVYT…TLFG), and 272-292 (LVVP…FKVG).

This sequence belongs to the anion channel-forming bestrophin (TC 1.A.46) family. Calcium-sensitive chloride channel subfamily. In terms of assembly, forms oligomers.

The protein resides in the cell membrane. Its function is as follows. Forms chloride channels. The chain is Bestrophin homolog 13 (best-13) from Caenorhabditis elegans.